The following is a 266-amino-acid chain: MTAIALSIAGSDSGGGAGIQADLKTFSALGVYGASVITAITAQNTRGVTAVEDVSAEIVSAQMDAVFSDLDVKAVKIGMVSRRETIAAIADGLRRFGKRAVVDPVMVATSGDALLRPDAVAALIEELLPLALVVTPNLAEAALMTGRAIAGDEAEMARQAEAIMRTGAHAVLVKGGHLKGQEATDLFFDGDTLVRLPAGRIETRNDHGTGCTLSAAIAAGLAKGVPLIEAVSAAKAYLHAAISAADRLEIGQGRGPVHHFHRWWKD.

4-amino-5-hydroxymethyl-2-methylpyrimidine is bound at residue Gln43.

This sequence belongs to the ThiD family.

The catalysed reaction is 4-amino-5-hydroxymethyl-2-methylpyrimidine + ATP = 4-amino-2-methyl-5-(phosphooxymethyl)pyrimidine + ADP + H(+). The enzyme catalyses 4-amino-2-methyl-5-(phosphooxymethyl)pyrimidine + ATP = 4-amino-2-methyl-5-(diphosphooxymethyl)pyrimidine + ADP. Its pathway is cofactor biosynthesis; thiamine diphosphate biosynthesis; 4-amino-2-methyl-5-diphosphomethylpyrimidine from 5-amino-1-(5-phospho-D-ribosyl)imidazole: step 2/3. It participates in cofactor biosynthesis; thiamine diphosphate biosynthesis; 4-amino-2-methyl-5-diphosphomethylpyrimidine from 5-amino-1-(5-phospho-D-ribosyl)imidazole: step 3/3. Functionally, catalyzes the phosphorylation of hydroxymethylpyrimidine phosphate (HMP-P) to HMP-PP, and of HMP to HMP-P. This is Hydroxymethylpyrimidine/phosphomethylpyrimidine kinase (thiD) from Rhizobium meliloti (strain 1021) (Ensifer meliloti).